The following is a 408-amino-acid chain: S-adenosylmethionine synthase (408 aa).

ATP is bound at residue His-16. Asp-18 serves as a coordination point for Mg(2+). Position 44 (Glu-44) interacts with K(+). Residues Glu-57 and Gln-100 each contribute to the L-methionine site. Residues Gln-100–Arg-110 form a flexible loop region. ATP contacts are provided by residues Asp-177–Lys-179, Asp-257, Arg-263–Lys-264, Ala-280, and Lys-284. Asp-257 provides a ligand contact to L-methionine. Lys-288 lines the L-methionine pocket.

The protein belongs to the AdoMet synthase family. As to quaternary structure, homotetramer; dimer of dimers. It depends on Mg(2+) as a cofactor. The cofactor is K(+).

The protein localises to the cytoplasm. The enzyme catalyses L-methionine + ATP + H2O = S-adenosyl-L-methionine + phosphate + diphosphate. Its pathway is amino-acid biosynthesis; S-adenosyl-L-methionine biosynthesis; S-adenosyl-L-methionine from L-methionine: step 1/1. Catalyzes the formation of S-adenosylmethionine (AdoMet) from methionine and ATP. The overall synthetic reaction is composed of two sequential steps, AdoMet formation and the subsequent tripolyphosphate hydrolysis which occurs prior to release of AdoMet from the enzyme. The polypeptide is S-adenosylmethionine synthase (Bifidobacterium animalis subsp. lactis (strain AD011)).